The sequence spans 654 residues: Acetyl-coenzyme A synthetase (654 aa).

CoA-binding positions include 190 to 193 (RGGK) and threonine 313. ATP contacts are provided by residues 389–391 (GEP), 413–418 (DTWWQT), aspartate 504, and arginine 519. Serine 527 serves as a coordination point for CoA. Arginine 530 serves as a coordination point for ATP. Residues valine 541 and valine 546 each coordinate Mg(2+). An N6-acetyllysine modification is found at lysine 613.

It belongs to the ATP-dependent AMP-binding enzyme family. Mg(2+) is required as a cofactor. Acetylated. Deacetylation by the SIR2-homolog deacetylase activates the enzyme.

It carries out the reaction acetate + ATP + CoA = acetyl-CoA + AMP + diphosphate. Catalyzes the conversion of acetate into acetyl-CoA (AcCoA), an essential intermediate at the junction of anabolic and catabolic pathways. AcsA undergoes a two-step reaction. In the first half reaction, AcsA combines acetate with ATP to form acetyl-adenylate (AcAMP) intermediate. In the second half reaction, it can then transfer the acetyl group from AcAMP to the sulfhydryl group of CoA, forming the product AcCoA. In Leptospira borgpetersenii serovar Hardjo-bovis (strain JB197), this protein is Acetyl-coenzyme A synthetase.